Here is a 324-residue protein sequence, read N- to C-terminus: Acetyl-coenzyme A carboxylase carboxyl transferase subunit alpha (324 aa).

Positions 44–298 (RFQDKLTKLQ…RKELIKQLNI (255 aa)) constitute a CoA carboxyltransferase C-terminal domain.

The protein belongs to the AccA family. Acetyl-CoA carboxylase is a heterohexamer composed of biotin carboxyl carrier protein (accB), biotin carboxylase (accC) and two subunits each of ACCase subunit alpha (accA) and ACCase subunit beta (accD).

Its subcellular location is the plastid. It localises to the chloroplast. It carries out the reaction N(6)-carboxybiotinyl-L-lysyl-[protein] + acetyl-CoA = N(6)-biotinyl-L-lysyl-[protein] + malonyl-CoA. It participates in lipid metabolism; malonyl-CoA biosynthesis; malonyl-CoA from acetyl-CoA: step 1/1. Functionally, component of the acetyl coenzyme A carboxylase (ACC) complex. First, biotin carboxylase catalyzes the carboxylation of biotin on its carrier protein (BCCP) and then the CO(2) group is transferred by the carboxyltransferase to acetyl-CoA to form malonyl-CoA. The polypeptide is Acetyl-coenzyme A carboxylase carboxyl transferase subunit alpha (Porphyra purpurea (Red seaweed)).